A 258-amino-acid polypeptide reads, in one-letter code: Type III pantothenate kinase (258 aa).

Residue aspartate 6 to valine 13 coordinates ATP. Residues tyrosine 100 and glycine 107 to arginine 110 each bind substrate. The active-site Proton acceptor is aspartate 109. Aspartate 129 contacts K(+). Threonine 132 is a binding site for ATP. Threonine 184 contacts substrate.

Belongs to the type III pantothenate kinase family. In terms of assembly, homodimer. It depends on NH4(+) as a cofactor. K(+) serves as cofactor.

Its subcellular location is the cytoplasm. It catalyses the reaction (R)-pantothenate + ATP = (R)-4'-phosphopantothenate + ADP + H(+). The protein operates within cofactor biosynthesis; coenzyme A biosynthesis; CoA from (R)-pantothenate: step 1/5. Catalyzes the phosphorylation of pantothenate (Pan), the first step in CoA biosynthesis. This chain is Type III pantothenate kinase, found in Clostridium botulinum (strain Loch Maree / Type A3).